The sequence spans 335 residues: Glutamyl-tRNA reductase (335 aa).

Residues 60-63 (TCHR), serine 110, 115-117 (ETE), and glutamine 121 contribute to the substrate site. The active-site Nucleophile is cysteine 61. 189–194 (GYSEIN) contacts NADP(+).

This sequence belongs to the glutamyl-tRNA reductase family. Homodimer.

It catalyses the reaction (S)-4-amino-5-oxopentanoate + tRNA(Glu) + NADP(+) = L-glutamyl-tRNA(Glu) + NADPH + H(+). The protein operates within porphyrin-containing compound metabolism; protoporphyrin-IX biosynthesis; 5-aminolevulinate from L-glutamyl-tRNA(Glu): step 1/2. Its function is as follows. Catalyzes the NADPH-dependent reduction of glutamyl-tRNA(Glu) to glutamate 1-semialdehyde (GSA). The chain is Glutamyl-tRNA reductase from Chlamydia trachomatis serovar D (strain ATCC VR-885 / DSM 19411 / UW-3/Cx).